The chain runs to 200 residues: LexA repressor (200 aa).

Active-site for autocatalytic cleavage activity residues include Ser-121 and Lys-158.

The protein belongs to the peptidase S24 family. Homodimer.

The enzyme catalyses Hydrolysis of Ala-|-Gly bond in repressor LexA.. Its function is as follows. Binds a consensus sequence 5'-TGTTC-N(4)-GAACA-3'; some genes have a tandem consensus sequence and their binding is cooperative. Binds to the promoters of a number of genes, including lexA and splB. Represses a number of genes involved in the response to DNA damage (SOS response). The sequence is that of LexA repressor from Opitutus terrae (strain DSM 11246 / JCM 15787 / PB90-1).